The following is a 311-amino-acid chain: tRNA dimethylallyltransferase (311 aa).

Residue 9 to 16 (GPTAVGKT) coordinates ATP. Residue 11–16 (TAVGKT) coordinates substrate. The tract at residues 34-37 (DSMQ) is interaction with substrate tRNA.

This sequence belongs to the IPP transferase family. As to quaternary structure, monomer. Requires Mg(2+) as cofactor.

It catalyses the reaction adenosine(37) in tRNA + dimethylallyl diphosphate = N(6)-dimethylallyladenosine(37) in tRNA + diphosphate. In terms of biological role, catalyzes the transfer of a dimethylallyl group onto the adenine at position 37 in tRNAs that read codons beginning with uridine, leading to the formation of N6-(dimethylallyl)adenosine (i(6)A). The protein is tRNA dimethylallyltransferase of Clostridium botulinum (strain Langeland / NCTC 10281 / Type F).